A 368-amino-acid chain; its full sequence is Germination protease (368 aa).

Residues 1-15 (MKEPLDLSKYSVRTD) constitute a propeptide that is removed on maturation.

This sequence belongs to the peptidase A25 family. In terms of assembly, homotetramer. Autoproteolytically processed. The inactive tetrameric zymogen termed p46 autoprocesses to a smaller form termed p41, which is active only during spore germination.

It catalyses the reaction Endopeptidase action with P4 Glu or Asp, P1 preferably Glu &gt; Asp, P1' hydrophobic and P2' Ala.. Its function is as follows. Initiates the rapid degradation of small, acid-soluble proteins during spore germination. This Bacillus anthracis (strain A0248) protein is Germination protease.